We begin with the raw amino-acid sequence, 87 residues long: Pro-gurmarin (87 aa).

The first 20 residues, 1–20 (MAKFAAIVLLILVASATVNA), serve as a signal peptide directing secretion. Positions 21-52 (VKEHDELPTTGMSRKILLQPVFKSLIISIAEG) are excised as a propeptide. Glutamine 53 is modified (pyrrolidone carboxylic acid). 3 disulfide bridges follow: cysteine 55–cysteine 70, cysteine 62–cysteine 75, and cysteine 69–cysteine 85.

As to expression, expressed in leaves (at protein level).

Functionally, peptide that strongly, but reversibly, suppresses the sweet taste-response to various sweeteners, including sugars, sweet amino acids and the artificial sweetener saccharin. In rodents, potentially binds to a sweet taste receptor present on apical microvilli of a subset of taste bud cells. Highly effective at blocking the sweet taste-response in rodents such as rats and mice, though mice may possess a mix of gurmarin-sensitive and -insensitive receptors. Has almost no effect on the sweet taste-response in humans. Inhibits Staphylococcus aureus biofilm formation without affecting bacterial viability. May be one of at least 9 different disulfide-rich peptides produced with varying properties. In Gymnema sylvestre (Gurmar), this protein is Pro-gurmarin.